The following is a 163-amino-acid chain: Crossover junction endodeoxyribonuclease RuvC (163 aa).

Catalysis depends on residues Asp-9, Glu-76, and Asp-148. Mg(2+) is bound by residues Asp-9, Glu-76, and Asp-148.

The protein belongs to the RuvC family. As to quaternary structure, homodimer which binds Holliday junction (HJ) DNA. The HJ becomes 2-fold symmetrical on binding to RuvC with unstacked arms; it has a different conformation from HJ DNA in complex with RuvA. In the full resolvosome a probable DNA-RuvA(4)-RuvB(12)-RuvC(2) complex forms which resolves the HJ. Requires Mg(2+) as cofactor.

It localises to the cytoplasm. The catalysed reaction is Endonucleolytic cleavage at a junction such as a reciprocal single-stranded crossover between two homologous DNA duplexes (Holliday junction).. Its function is as follows. The RuvA-RuvB-RuvC complex processes Holliday junction (HJ) DNA during genetic recombination and DNA repair. Endonuclease that resolves HJ intermediates. Cleaves cruciform DNA by making single-stranded nicks across the HJ at symmetrical positions within the homologous arms, yielding a 5'-phosphate and a 3'-hydroxyl group; requires a central core of homology in the junction. The consensus cleavage sequence is 5'-(A/T)TT(C/G)-3'. Cleavage occurs on the 3'-side of the TT dinucleotide at the point of strand exchange. HJ branch migration catalyzed by RuvA-RuvB allows RuvC to scan DNA until it finds its consensus sequence, where it cleaves and resolves the cruciform DNA. In Nostoc sp. (strain PCC 7120 / SAG 25.82 / UTEX 2576), this protein is Crossover junction endodeoxyribonuclease RuvC.